A 405-amino-acid polypeptide reads, in one-letter code: Aspartokinase (405 aa).

ACT domains lie at 267 to 344 (VSME…AKVS) and 345 to 405 (IVGV…QLDQ).

The protein belongs to the aspartokinase family.

The catalysed reaction is L-aspartate + ATP = 4-phospho-L-aspartate + ADP. It functions in the pathway amino-acid biosynthesis; L-lysine biosynthesis via DAP pathway; (S)-tetrahydrodipicolinate from L-aspartate: step 1/4. Its pathway is amino-acid biosynthesis; L-methionine biosynthesis via de novo pathway; L-homoserine from L-aspartate: step 1/3. It participates in amino-acid biosynthesis; L-threonine biosynthesis; L-threonine from L-aspartate: step 1/5. This is Aspartokinase (lysC) from Helicobacter pylori (strain ATCC 700392 / 26695) (Campylobacter pylori).